The sequence spans 297 residues: Halorhodopsin (297 aa).

Residues 1 to 31 (MRSRTYHDQSVCGPYGSQRTDCDRDTDAGSD) are disordered. Over 1-45 (MRSRTYHDQSVCGPYGSQRTDCDRDTDAGSDTDVHGAQVATQIRT) the chain is Extracellular. A helical membrane pass occupies residues 46-71 (DTLLHSSLWVNIALAGLSILVFLYMA). Residues 72 to 77 (RTVRAN) are Cytoplasmic-facing. Residues 78 to 101 (RARLIVGATLMIPLVSLSSYLGLV) traverse the membrane as a helical segment. Residues 102-125 (TGLTAGPIEMPAAHALAGEDVLSQ) lie on the Extracellular side of the membrane. A helical transmembrane segment spans residues 126 to 147 (WGRYLTWTLSTPMILLALGWLA). The Cytoplasmic portion of the chain corresponds to 148-150 (EVD). A helical transmembrane segment spans residues 151–174 (TADLFVVIAADIGMCLTGLAAALT). Residues 175 to 177 (TSS) are Extracellular-facing. Residues 178 to 200 (YAFRWAFYLVSTAFFVVVLYALL) traverse the membrane as a helical segment. Topologically, residues 201-212 (AKWPTNAEAAGT) are cytoplasmic. A helical transmembrane segment spans residues 213–236 (GDIFGTLRWLTVILWLGYPILWAL). Residues 237–246 (GVEGFALVDS) lie on the Extracellular side of the membrane. A helical membrane pass occupies residues 247–275 (VGLTSWGYSLLDIGAKYLFAALLLRWVAN). Lys-262 carries the post-translational modification N6-(retinylidene)lysine. The Cytoplasmic segment spans residues 276–297 (NERTIAVGQRSGRGAIGDPVED).

This sequence belongs to the archaeal/bacterial/fungal opsin family.

It localises to the cell membrane. Functionally, light-driven chloride pump. This is Halorhodopsin (hop) from Haloterrigena sp. (strain arg-4).